We begin with the raw amino-acid sequence, 79 residues long: Cell division protein ZapB (79 aa).

Positions 3–79 (LEVFEKLEAK…QALLGRMEEV (77 aa)) form a coiled coil. The segment covering 36-45 (SLTQEVQSAQ) has biased composition (polar residues). Residues 36-63 (SLTQEVQSAQHQREELERENNSLKEQQS) form a disordered region. The span at 46 to 57 (HQREELERENNS) shows a compositional bias: basic and acidic residues.

Belongs to the ZapB family. Homodimer. The ends of the coiled-coil dimer bind to each other, forming polymers. Interacts with FtsZ.

Its subcellular location is the cytoplasm. Functionally, non-essential, abundant cell division factor that is required for proper Z-ring formation. It is recruited early to the divisome by direct interaction with FtsZ, stimulating Z-ring assembly and thereby promoting cell division earlier in the cell cycle. Its recruitment to the Z-ring requires functional FtsA or ZipA. In Salmonella agona (strain SL483), this protein is Cell division protein ZapB.